The chain runs to 40 residues: uncharacterized protein (40 aa).

This is an uncharacterized protein from Treponema pallidum (strain Nichols).